Consider the following 295-residue polypeptide: Thioredoxin-related transmembrane protein 2 (295 aa).

Residues 1–48 (MAVLAPLIALVYSVPRLSRWLARPYCLLSALLSIAFLLVRKLPPICNG) form the signal peptide. Residues 49-102 (LPTQREDGNPCDFDWREVEILMFLSAIVMMKNRRSITVEQHVGNIFMFSKVANA) lie on the Extracellular side of the membrane. Residues 103–125 (ILFFRLDIRMGLLYLTLCIVFLM) traverse the membrane as a helical segment. One can recognise a Thioredoxin domain in the interval 114-269 (LLYLTLCIVF…LYQRAKKHSK (156 aa)). The Cytoplasmic portion of the chain corresponds to 126–295 (TCKPPLYMGP…VPDGENKKDK (170 aa)). Ser211 and Ser243 each carry phosphoserine. The segment at 266 to 295 (KHSKGGDMSEEKPVDPAPTTVPDGENKKDK) is disordered. The segment covering 269 to 279 (KGGDMSEEKPV) has biased composition (basic and acidic residues). The short motif at 292–295 (KKDK) is the Di-lysine motif element.

As to quaternary structure, monomer. Homodimer; disulfide-linked. Occurs in both reduced and oxidized monomeric form. Oxidative conditions increase homodimerization. Interacts with CANX. Interacts with ATP2A2.

The protein resides in the endoplasmic reticulum membrane. It localises to the mitochondrion membrane. Endoplasmic reticulum and mitochondria-associated protein that probably functions as a regulator of cellular redox state and thereby regulates protein post-translational modification, protein folding and mitochondrial activity. Indirectly regulates neuronal proliferation, migration, and organization in the developing brain. The protein is Thioredoxin-related transmembrane protein 2 (Tmx2) of Mus musculus (Mouse).